Here is a 515-residue protein sequence, read N- to C-terminus: Fatty acyl-CoA reductase 2 (515 aa).

Topologically, residues 1 to 464 (MSTIAAFYGG…KAKQRLKRLR (464 aa)) are cytoplasmic. The helical transmembrane segment at 465–484 (NIHYLFNTALFLIAWRLLIA) threads the bilayer. Over 485–515 (RSQMARNVWFFIVSFCYKFLSYFRASSTLKV) the chain is Peroxisomal.

It belongs to the fatty acyl-CoA reductase family.

It is found in the peroxisome membrane. The enzyme catalyses a long-chain fatty acyl-CoA + 2 NADPH + 2 H(+) = a long-chain primary fatty alcohol + 2 NADP(+) + CoA. The catalysed reaction is a very long-chain fatty acyl-CoA + 2 NADPH + 2 H(+) = a very long-chain primary fatty alcohol + 2 NADP(+) + CoA. It carries out the reaction an ultra-long-chain fatty acyl-CoA + 2 NADPH + 2 H(+) = an ultra long-chain primary fatty alcohol + 2 NADP(+) + CoA. It catalyses the reaction hexadecanoyl-CoA + 2 NADPH + 2 H(+) = hexadecan-1-ol + 2 NADP(+) + CoA. The enzyme catalyses octadecanoyl-CoA + 2 NADPH + 2 H(+) = octadecan-1-ol + 2 NADP(+) + CoA. The catalysed reaction is eicosanoyl-CoA + 2 NADPH + 2 H(+) = eicosan-1-ol + 2 NADP(+) + CoA. It carries out the reaction docosanoyl-CoA + 2 NADPH + 2 H(+) = docosan-1-ol + 2 NADP(+) + CoA. It catalyses the reaction tetracosanoyl-CoA + 2 NADPH + 2 H(+) = tetracosan-1-ol + 2 NADP(+) + CoA. The enzyme catalyses hexacosanoyl-CoA + 2 NADPH + 2 H(+) = hexacosan-1-ol + 2 NADP(+) + CoA. The catalysed reaction is octacosanoyl-CoA + 2 NADPH + 2 H(+) = octacosan-1-ol + 2 NADP(+) + CoA. It carries out the reaction triacontanoyl-CoA + 2 NADPH + 2 H(+) = triacontan-1-ol + 2 NADP(+) + CoA. It catalyses the reaction 18-methylnonadecanoyl-CoA + 2 NADPH + 2 H(+) = 18-methylnonadecan-1-ol + 2 NADP(+) + CoA. The enzyme catalyses 20-methylheneicosanoyl-CoA + 2 NADPH + 2 H(+) = 20-methylheneicosan-1-ol + 2 NADP(+) + CoA. The catalysed reaction is 22-methyltricosanoyl-CoA + 2 NADPH + 2 H(+) = 22-methyltricosan-1-ol + 2 NADP(+) + CoA. It carries out the reaction 24-methylpentacosanoyl-CoA + 2 NADPH + 2 H(+) = 24-methylpentacosan-1-ol + 2 NADP(+) + CoA. In terms of biological role, catalyzes the reduction of saturated but not unsaturated C16 or C18 fatty acyl-CoA to fatty alcohols (FAls). A lower activity can be observed with shorter fatty acyl-CoA substrates. Can produce very long-chain and ultra long-chain FAls, regardless of whether they have a straight or branched chain. Involved in the production of ether lipids/plasmalogens and wax monoesters whose synthesis requires FAls as substrates. This is Fatty acyl-CoA reductase 2 from Homo sapiens (Human).